A 229-amino-acid polypeptide reads, in one-letter code: Large ribosomal subunit protein uL1 (229 aa).

It belongs to the universal ribosomal protein uL1 family. As to quaternary structure, part of the 50S ribosomal subunit.

Functionally, binds directly to 23S rRNA. The L1 stalk is quite mobile in the ribosome, and is involved in E site tRNA release. In terms of biological role, protein L1 is also a translational repressor protein, it controls the translation of the L11 operon by binding to its mRNA. This is Large ribosomal subunit protein uL1 from Clostridium perfringens (strain ATCC 13124 / DSM 756 / JCM 1290 / NCIMB 6125 / NCTC 8237 / Type A).